The chain runs to 1052 residues: SE-cephalotoxin (1052 aa).

The signal sequence occupies residues 1–21; it reads MMGTSRCVILLFALLLWAANA. Residues 22-29 constitute a propeptide that is removed on maturation; the sequence is APPEIHTT. N41 carries an N-linked (GlcNAc...) asparagine glycan. Residues 130–194 are a coiled coil; that stretch reads TGVNRKLDQI…DMNKRRLMAE (65 aa). A glycan (N-linked (GlcNAc...) asparagine) is linked at N353. An EGF-like domain is found at 460–497; the sequence is PGNPCNHGCNGHGECKVVPYTDQFQCFCHGNYEGKMCQ. Intrachain disulfides connect C464–C474, C468–C485, and C487–C496. N-linked (GlcNAc...) asparagine glycans are attached at residues N576 and N715. The Sushi domain maps to 709–769; the sequence is TSCPPLNVTH…QWSATPKCES (61 aa). 7 disulfides stabilise this stretch: C711/C752, C739/C767, C780/C814, C784/C820, C795/C804, C829/C847, and C841/C858. A TSP type-1 domain is found at 768–821; it reads ESSWSRWSKWSACASTCGNATQSRRRRCLGQSESEKCIGPSKQVRKCFVEDCCQ. Residue N786 is glycosylated (N-linked (GlcNAc...) asparagine). In terms of domain architecture, LDL-receptor class A spans 819–859; sequence CCQEKYGKFKCDNNKCISLSRVCDGNDDCRNAEDESKSRCK.

As to quaternary structure, monomer. In terms of tissue distribution, expressed by the salivary gland.

It is found in the secreted. The chain is SE-cephalotoxin from Acanthosepion esculentum (Golden cuttlefish).